A 104-amino-acid chain; its full sequence is Large ribosomal subunit protein uL24 (104 aa).

Belongs to the universal ribosomal protein uL24 family. Part of the 50S ribosomal subunit.

Functionally, one of two assembly initiator proteins, it binds directly to the 5'-end of the 23S rRNA, where it nucleates assembly of the 50S subunit. One of the proteins that surrounds the polypeptide exit tunnel on the outside of the subunit. This is Large ribosomal subunit protein uL24 from Clostridium botulinum (strain Alaska E43 / Type E3).